The chain runs to 2168 residues: Bromodomain adjacent to zinc finger domain protein 2B (2168 aa).

8 disordered regions span residues 1–29, 140–348, 409–428, 459–479, 528–698, 719–740, 841–872, and 1021–1043; these read MESGERLPSSAASSTTPTSSSTPSVASVV, FAPP…KQPQ, LKAGNKNTSEESSLLTSELR, SNPKATSSSPAHPKQTLENNH, STPF…LHIA, GTSSSTLTSSPHSGTSKRRRVT, MEGRRGRPPNPDRQRAREESRMRRRKGRPPNV, and RKKAEEKERLKQEKRDEKRLNKE. Residues 8–29 are compositionally biased toward low complexity; that stretch reads PSSAASSTTPTSSSTPSVASVV. Composition is skewed to polar residues over residues 146–163 and 171–193; these read NHDSSSFHSRTSGKSNRN and GSINGSNTSSVIGINTSVLSTTA. Composition is skewed to low complexity over residues 194 to 204 and 240 to 263; these read SSSMGQTKSTS and ESSSNSDSDSGTSSDTSSEGISSS. Positions 264–291 are enriched in acidic residues; it reads DSDDLEEDEEEEDQSIEESEDDDSDSES. Residues 307 to 325 are compositionally biased toward basic and acidic residues; it reads SDPKADGQKATEKAQEKRI. Low complexity predominate over residues 335-348; sequence SQTHSFQSQQKQPQ. 2 stretches are compositionally biased toward polar residues: residues 461–479 and 528–551; these read PKATSSSPAHPKQTLENNH and STPFSSPVNLSTSGRRTPGNQTPV. Basic and acidic residues predominate over residues 592–605; sequence RGTDSDIPSSKDSE. The span at 606 to 663 shows a compositional bias: acidic residues; the sequence is DSNEDEEEDDEEEDEEDDEDDESDDSQSESDSNSESDTEGSEEEDDDDKDQDESDSDT. The span at 670-693 shows a compositional bias: polar residues; it reads MKLNKTTSSVKSPSMSLTGHSTPR. Over residues 720-732 the composition is skewed to low complexity; it reads TSSSTLTSSPHSG. The MBD domain maps to 739-810; sequence VTDERELRIP…DNFSFSAKIR (72 aa). The segment covering 841 to 861 has biased composition (basic and acidic residues); it reads MEGRRGRPPNPDRQRAREESR. A coiled-coil region spans residues 883-1061; that stretch reads AKLLRKLQAQ…ELEMAKELKK (179 aa). Residues 1087 to 1152 form the DDT domain; it reads GSTFSDCLMV…LSAAVCDPGL (66 aa). The interval 1265–1341 is disordered; the sequence is KRDTSGGIDL…CEDEDEGDQA (77 aa). Residues 1297-1321 show a composition bias toward acidic residues; it reads SDYDDDDDDDSDDQGDEDDEDEEDK. The span at 1322–1331 shows a compositional bias: basic and acidic residues; that stretch reads EDKKGKKTDI. Residues 1334–1375 are a coiled coil; sequence DEDEGDQAASVEELEKQIEKLSKQQSQYRRKLFDASHSLRSV. A Glycyl lysine isopeptide (Lys-Gly) (interchain with G-Cter in SUMO2) cross-link involves residue lysine 1425. Position 1462 is an N6-acetyllysine (lysine 1462). 2 positions are modified to phosphoserine: serine 1465 and serine 1467. The segment covering 1503–1533 has biased composition (polar residues); that stretch reads SGKHSLGSVQSTATQSNVEKADSNNLFNTGS. Disordered stretches follow at residues 1503 to 1542, 1582 to 1607, and 1670 to 1694; these read SGKHSLGSVQSTATQSNVEKADSNNLFNTGSSGPGKFYSP, SLVTPQSQPPSKSPSPTPAPLGSSAQ, and TSNVASSKSESPVPQNEKATSAQPA. Positions 1588 to 1600 are enriched in pro residues; it reads SQPPSKSPSPTPA. Positions 1670-1692 are enriched in polar residues; sequence TSNVASSKSESPVPQNEKATSAQ. Position 1680 is a phosphoserine (serine 1680). The segment at 1931–1981 adopts a PHD-type zinc-finger fold; that stretch reads KVYCQICRKGDNEELLLLCDGCDKGCHTYCHRPKITTIPDGDWFCPACIAK. A disordered region spans residues 1998–2040; sequence KTNESKKGKKVTLTGDTEDEDSASTSSSLKRGNKDLKKRKMEE. The residue at position 2014 (threonine 2014) is a Phosphothreonine. At serine 2019 the chain carries Phosphoserine. Residues 2029–2040 are compositionally biased toward basic and acidic residues; the sequence is GNKDLKKRKMEE. The region spanning 2060-2164 is the Bromo domain; it reads RDDSKDLALC…KYFEKKWTDT (105 aa).

This sequence belongs to the WAL family. In terms of assembly, component of the BRF-1 ISWI chromatin remodeling complex, at least composed of SMARCA1 and BAZ2B, which regulates the spacing of histone octamers on the DNA template to facilitate access to DNA. Within the BRF-1 ISWI chromatin remodeling complex interacts with SMARCA1; the interaction is direct. Component of the BRF-5 ISWI chromatin remodeling complex, at least composed of SMARCA5/SNF2H and BAZ2B, which regulates the spacing of histone octamers on the DNA template to facilitate access to DNA. Within the BRF-5 ISWI chromatin remodeling complex interacts with SMARCA5/SNF2H; the interaction is direct. Interacts with acetylated lysine residues on histone H1.4, H2A, H2B, H3 and H4 (in vitro). Interacts with EHMT1. As to expression, expressed at varying levels in several tissues, whereas a smaller transcript was expressed specifically in testis.

The protein localises to the nucleus. In terms of biological role, regulatory subunit of the ATP-dependent BRF-1 and BRF-5 ISWI chromatin remodeling complexes, which form ordered nucleosome arrays on chromatin and facilitate access to DNA during DNA-templated processes such as DNA replication, transcription, and repair. Both complexes regulate the spacing of nucleosomes along the chromatin and have the ability to slide mononucleosomes to the center of a DNA template. The BRF-1 ISWI chromatin remodeling complex has a lower ATP hydrolysis rate than the BRF-5 ISWI chromatin remodeling complex. Chromatin reader protein, which may play a role in transcriptional regulation via interaction with ISWI. Involved in positively modulating the rate of age-related behavioral deterioration. Represses the expression of mitochondrial function-related genes, perhaps by occupying their promoter regions, working in concert with histone methyltransferase EHMT1. The protein is Bromodomain adjacent to zinc finger domain protein 2B (BAZ2B) of Homo sapiens (Human).